A 387-amino-acid polypeptide reads, in one-letter code: Cysteine desulfurase IscS (387 aa).

Pyridoxal 5'-phosphate is bound by residues 73 to 74 (AT), Asn-155, Gln-183, and 203 to 205 (SAH). Position 206 is an N6-(pyridoxal phosphate)lysine (Lys-206). A pyridoxal 5'-phosphate-binding site is contributed by Thr-241. Residue Cys-328 is the Cysteine persulfide intermediate of the active site. Residue Cys-328 coordinates [2Fe-2S] cluster.

This sequence belongs to the class-V pyridoxal-phosphate-dependent aminotransferase family. NifS/IscS subfamily. As to quaternary structure, homodimer. Forms a heterotetramer with IscU, interacts with other sulfur acceptors. Pyridoxal 5'-phosphate is required as a cofactor.

Its subcellular location is the cytoplasm. It catalyses the reaction (sulfur carrier)-H + L-cysteine = (sulfur carrier)-SH + L-alanine. Its pathway is cofactor biosynthesis; iron-sulfur cluster biosynthesis. Functionally, master enzyme that delivers sulfur to a number of partners involved in Fe-S cluster assembly, tRNA modification or cofactor biosynthesis. Catalyzes the removal of elemental sulfur atoms from cysteine to produce alanine. Functions as a sulfur delivery protein for Fe-S cluster synthesis onto IscU, an Fe-S scaffold assembly protein, as well as other S acceptor proteins. The polypeptide is Cysteine desulfurase IscS (Helicobacter pylori (strain ATCC 700392 / 26695) (Campylobacter pylori)).